A 430-amino-acid chain; its full sequence is Enolase (430 aa).

(2R)-2-phosphoglycerate is bound at residue Q163. Residue E205 is the Proton donor of the active site. 3 residues coordinate Mg(2+): D242, E285, and D312. Residues K337, R366, S367, and K388 each coordinate (2R)-2-phosphoglycerate. Residue K337 is the Proton acceptor of the active site.

Belongs to the enolase family. It depends on Mg(2+) as a cofactor.

It is found in the cytoplasm. Its subcellular location is the secreted. It localises to the cell surface. It catalyses the reaction (2R)-2-phosphoglycerate = phosphoenolpyruvate + H2O. The protein operates within carbohydrate degradation; glycolysis; pyruvate from D-glyceraldehyde 3-phosphate: step 4/5. Catalyzes the reversible conversion of 2-phosphoglycerate (2-PG) into phosphoenolpyruvate (PEP). It is essential for the degradation of carbohydrates via glycolysis. This is Enolase from Rubrobacter xylanophilus (strain DSM 9941 / JCM 11954 / NBRC 16129 / PRD-1).